Consider the following 314-residue polypeptide: Thymidylate synthase (314 aa).

DUMP-binding positions include arginine 21 and 176–177 (RR). Cysteine 196 serves as the catalytic Nucleophile. DUMP is bound by residues 216–219 (RSAD), asparagine 227, and 257–259 (HLY). Aspartate 219 serves as a coordination point for (6R)-5,10-methylene-5,6,7,8-tetrahydrofolate. Serine 313 is a (6R)-5,10-methylene-5,6,7,8-tetrahydrofolate binding site.

Belongs to the thymidylate synthase family. Bacterial-type ThyA subfamily. As to quaternary structure, homodimer.

The protein localises to the cytoplasm. It catalyses the reaction dUMP + (6R)-5,10-methylene-5,6,7,8-tetrahydrofolate = 7,8-dihydrofolate + dTMP. It participates in pyrimidine metabolism; dTTP biosynthesis. Functionally, catalyzes the reductive methylation of 2'-deoxyuridine-5'-monophosphate (dUMP) to 2'-deoxythymidine-5'-monophosphate (dTMP) while utilizing 5,10-methylenetetrahydrofolate (mTHF) as the methyl donor and reductant in the reaction, yielding dihydrofolate (DHF) as a by-product. This enzymatic reaction provides an intracellular de novo source of dTMP, an essential precursor for DNA biosynthesis. This chain is Thymidylate synthase, found in Listeria monocytogenes serovar 1/2a (strain ATCC BAA-679 / EGD-e).